Reading from the N-terminus, the 135-residue chain is Large ribosomal subunit protein mL54 (135 aa).

It belongs to the mitochondrion-specific ribosomal protein mL54 family. As to quaternary structure, component of the mitochondrial ribosome large subunit (39S) which comprises a 16S rRNA and about 50 distinct proteins.

It localises to the mitochondrion. In Danio rerio (Zebrafish), this protein is Large ribosomal subunit protein mL54 (mrpl54).